The sequence spans 184 residues: ATP synthase subunit b, chloroplastic (184 aa).

The chain crosses the membrane as a helical span at residues 31 to 49; sequence IINSSVVLSVLIYFGKGVL.

The protein belongs to the ATPase B chain family. F-type ATPases have 2 components, F(1) - the catalytic core - and F(0) - the membrane proton channel. F(1) has five subunits: alpha(3), beta(3), gamma(1), delta(1), epsilon(1). F(0) has four main subunits: a(1), b(1), b'(1) and c(10-14). The alpha and beta chains form an alternating ring which encloses part of the gamma chain. F(1) is attached to F(0) by a central stalk formed by the gamma and epsilon chains, while a peripheral stalk is formed by the delta, b and b' chains.

It localises to the plastid. It is found in the chloroplast thylakoid membrane. Its function is as follows. F(1)F(0) ATP synthase produces ATP from ADP in the presence of a proton or sodium gradient. F-type ATPases consist of two structural domains, F(1) containing the extramembraneous catalytic core and F(0) containing the membrane proton channel, linked together by a central stalk and a peripheral stalk. During catalysis, ATP synthesis in the catalytic domain of F(1) is coupled via a rotary mechanism of the central stalk subunits to proton translocation. Component of the F(0) channel, it forms part of the peripheral stalk, linking F(1) to F(0). This Pinus thunbergii (Japanese black pine) protein is ATP synthase subunit b, chloroplastic.